Reading from the N-terminus, the 512-residue chain is Solute carrier family 2, facilitated glucose transporter member 7 (512 aa).

The Cytoplasmic portion of the chain corresponds to 1-21 (MENKEAGTPPPIPSREGRLQP). Residues 22–42 (TLLLATLSAAFGSAFQYGYNL) form a helical membrane-spanning segment. At 43 to 78 (SVVNTPHKVFKSFYNETYFERHATFMDGKLMLLLWS) the chain is on the extracellular side. Residue N57 is glycosylated (N-linked (GlcNAc...) asparagine). A helical membrane pass occupies residues 79–99 (CTVSMFPLGGLLGSLLVGLLV). Over 100–107 (DSCGRKGT) the chain is Cytoplasmic. Residues 108–128 (LLINNIFAIIPAILMGVSKVA) traverse the membrane as a helical segment. At 129 to 138 (KAFELIVFSR) the chain is on the extracellular side. A helical transmembrane segment spans residues 139-159 (VVLGVCAGISYSALPMYLGEL). The Cytoplasmic portion of the chain corresponds to 160 to 172 (APKNLRGMVGTMT). A helical transmembrane segment spans residues 173–193 (EVFVIVGVFLAQIFSLQAILG). Over 194-198 (NPAGW) the chain is Extracellular. Residues 199-219 (PVLLALTGVPALLQLLTLPFF) traverse the membrane as a helical segment. Residues 220 to 281 (PESPRYSLIQ…LHLCALRSLR (62 aa)) are Cytoplasmic-facing. Residues 282 to 302 (WQLLSIIVLMAGQQLSGINAI) form a helical membrane-spanning segment. Residues 294 to 295 (QQ) and N300 contribute to the D-glucose site. The Extracellular segment spans residues 303–321 (NYYADTIYTSAGVEAAHSQ). Residues 322–342 (YVTVGSGVVNIVMTITSAVLV) form a helical membrane-spanning segment. N331 is a binding site for D-glucose. Residues 343-350 (ERLGRRHL) are Cytoplasmic-facing. A helical membrane pass occupies residues 351–371 (LLAGYGICGSACLVLTVVLLF). The Extracellular segment spans residues 372 to 379 (QNRVPELS). Residues 380 to 400 (YLGIICVFAYIAGHSIGPSPV) form a helical membrane-spanning segment. The Cytoplasmic segment spans residues 401–415 (PSVVRTEIFLQSSRR). A helical membrane pass occupies residues 416 to 436 (AAFMVDGAVHWLTNFIIGFLF). The Extracellular segment spans residues 437–445 (PSIQEAIGA). The chain crosses the membrane as a helical span at residues 446–466 (YSFIIFAGICLLTAIYIYVVI). Residues 467-512 (PETKGKTFVEINRIFAKRNRVKLPEEKEETIDAGPPTASPAKETSF) lie on the Cytoplasmic side of the membrane. Residues 491 to 512 (EEKEETIDAGPPTASPAKETSF) form a disordered region.

This sequence belongs to the major facilitator superfamily. Sugar transporter (TC 2.A.1.1) family. Glucose transporter subfamily. As to expression, expressed in small intestine and colon. Weakly expressed in testis and prostate.

It is found in the cell membrane. The protein resides in the apical cell membrane. The enzyme catalyses D-glucose(out) = D-glucose(in). It catalyses the reaction D-fructose(out) = D-fructose(in). With respect to regulation, glucose and fructose transport are inhibited by the flavonoid apigenin. Its function is as follows. Probable sugar transporter. Even if its physiological substrate is subject to discussion, it is able to transport glucose and fructose. Does not transport galactose, 2-deoxy-d-glucose and xylose. This is Solute carrier family 2, facilitated glucose transporter member 7 from Homo sapiens (Human).